A 77-amino-acid polypeptide reads, in one-letter code: Small ribosomal subunit protein uS17 (77 aa).

This sequence belongs to the universal ribosomal protein uS17 family. In terms of assembly, part of the 30S ribosomal subunit.

Functionally, one of the primary rRNA binding proteins, it binds specifically to the 5'-end of 16S ribosomal RNA. In Rickettsia canadensis (strain McKiel), this protein is Small ribosomal subunit protein uS17.